Consider the following 259-residue polypeptide: Putative carbamate hydrolase RutD (259 aa).

It belongs to the AB hydrolase superfamily. Hydrolase RutD family.

It catalyses the reaction carbamate + 2 H(+) = NH4(+) + CO2. Involved in pyrimidine catabolism. May facilitate the hydrolysis of carbamate, a reaction that can also occur spontaneously. The protein is Putative carbamate hydrolase RutD of Pseudomonas savastanoi pv. phaseolicola (strain 1448A / Race 6) (Pseudomonas syringae pv. phaseolicola (strain 1448A / Race 6)).